We begin with the raw amino-acid sequence, 363 residues long: UDP-N-acetylglucosamine--N-acetylmuramyl-(pentapeptide) pyrophosphoryl-undecaprenol N-acetylglucosamine transferase (363 aa).

UDP-N-acetyl-alpha-D-glucosamine contacts are provided by residues 7-9 (TGG), asparagine 125, serine 196, isoleucine 251, and glutamine 296.

This sequence belongs to the glycosyltransferase 28 family. MurG subfamily.

The protein resides in the cell membrane. It catalyses the reaction Mur2Ac(oyl-L-Ala-gamma-D-Glu-L-Lys-D-Ala-D-Ala)-di-trans,octa-cis-undecaprenyl diphosphate + UDP-N-acetyl-alpha-D-glucosamine = beta-D-GlcNAc-(1-&gt;4)-Mur2Ac(oyl-L-Ala-gamma-D-Glu-L-Lys-D-Ala-D-Ala)-di-trans,octa-cis-undecaprenyl diphosphate + UDP + H(+). It participates in cell wall biogenesis; peptidoglycan biosynthesis. In terms of biological role, cell wall formation. Catalyzes the transfer of a GlcNAc subunit on undecaprenyl-pyrophosphoryl-MurNAc-pentapeptide (lipid intermediate I) to form undecaprenyl-pyrophosphoryl-MurNAc-(pentapeptide)GlcNAc (lipid intermediate II). This Latilactobacillus sakei subsp. sakei (strain 23K) (Lactobacillus sakei subsp. sakei) protein is UDP-N-acetylglucosamine--N-acetylmuramyl-(pentapeptide) pyrophosphoryl-undecaprenol N-acetylglucosamine transferase.